The chain runs to 88 residues: FAD assembly factor SdhE (88 aa).

It belongs to the SdhE FAD assembly factor family. In terms of assembly, monomer. Makes weak or transient interactions with SdhA. Interacts with YgfX. Interacts with FrdA.

It localises to the cytoplasm. It functions in the pathway antibiotic biosynthesis; prodigiosin biosynthesis. An FAD assembly protein, which accelerates covalent attachment of the cofactor into other proteins. Plays an essential role in the assembly of succinate dehydrogenase (SDH, respiratory complex II), an enzyme complex that is a component of both the tricarboxylic acid cycle and the electron transport chain, and which couples the oxidation of succinate to fumarate with the reduction of ubiquinone (coenzyme Q) to ubiquinol. Required for flavinylation (covalent attachment of FAD) of the flavoprotein subunit SdhA of SDH. Required for flavinylation of the flavoprotein subunit FrdA of fumarate reductase (FRD). Flavinylation of SDH and FRD occurs in a similar but not identical manner, as site-specific mutations display subtle differences between them. Flavinylates SdhA in vivo in the absence of the other SDH subunits; SdhE mutants that do not flavinylate also interfere with wild-type activity in a possible dominant-negative fashion. Weakly binds to FAD and facilitates its binding to SdhA. Required for production of prodigiosin antibiotic (Pig); overproduction of SdhE in a deletion mutant leads to decreased synthesis of Pig compared to wild-type. Capable of flavinylating A.pasteurianus SdhA when the SDH operon and this gene are expressed in G.oxydans; flavinylation of SdhA is detected only in the presence of sdhE. This chain is FAD assembly factor SdhE, found in Serratia sp. (strain ATCC 39006) (Prodigiosinella confusarubida).